A 488-amino-acid polypeptide reads, in one-letter code: Malonate-semialdehyde dehydrogenase 2 (488 aa).

5 residues coordinate NAD(+): phenylalanine 155, lysine 179, glutamate 182, arginine 183, and serine 232. The Nucleophile role is filled by cysteine 287. Position 387 (glutamate 387) interacts with NAD(+).

The protein belongs to the aldehyde dehydrogenase family. IolA subfamily. As to quaternary structure, homotetramer.

It catalyses the reaction 3-oxopropanoate + NAD(+) + CoA + H2O = hydrogencarbonate + acetyl-CoA + NADH + H(+). The enzyme catalyses 2-methyl-3-oxopropanoate + NAD(+) + CoA + H2O = propanoyl-CoA + hydrogencarbonate + NADH + H(+). It functions in the pathway polyol metabolism; myo-inositol degradation into acetyl-CoA; acetyl-CoA from myo-inositol: step 7/7. Functionally, catalyzes the oxidation of malonate semialdehyde (MSA) and methylmalonate semialdehyde (MMSA) into acetyl-CoA and propanoyl-CoA, respectively. Is involved in a myo-inositol catabolic pathway. Bicarbonate, and not CO2, is the end-product of the enzymatic reaction. In Bacillus cereus (strain ZK / E33L), this protein is Malonate-semialdehyde dehydrogenase 2.